A 323-amino-acid polypeptide reads, in one-letter code: Oligodendrocyte transcription factor 2 (323 aa).

The segment covering 1–13 (MDSDASLVSSRPS) has biased composition (polar residues). The tract at residues 1–107 (MDSDASLVSS…KKQMTEPELQ (107 aa)) is disordered. Positions 77–93 (SSSSSTSSSTSSAATSS) are enriched in low complexity. A bHLH domain is found at 108–162 (QLRLKINSRERKRMHDLNIAMDGLREVMPYAHGPSVRKLSKIATLLLARNYILML).

As to quaternary structure, interacts with NKX2-2. Interacts with ZNF488. In terms of tissue distribution, expressed specifically in the brain.

It localises to the nucleus. The protein localises to the cytoplasm. Its function is as follows. Required for oligodendrocyte and motor neuron specification in the spinal cord, as well as for the development of somatic motor neurons in the hindbrain. Functions together with ZNF488 to promote oligodendrocyte differentiation. Cooperates with OLIG1 to establish the pMN domain of the embryonic neural tube. Antagonist of V2 interneuron and of NKX2-2-induced V3 interneuron development. This chain is Oligodendrocyte transcription factor 2 (Olig2), found in Mus musculus (Mouse).